A 458-amino-acid chain; its full sequence is Argininosuccinate lyase (458 aa).

It belongs to the lyase 1 family. Argininosuccinate lyase subfamily.

The protein localises to the cytoplasm. The enzyme catalyses 2-(N(omega)-L-arginino)succinate = fumarate + L-arginine. Its pathway is amino-acid biosynthesis; L-arginine biosynthesis; L-arginine from L-ornithine and carbamoyl phosphate: step 3/3. This Salmonella choleraesuis (strain SC-B67) protein is Argininosuccinate lyase.